Consider the following 471-residue polypeptide: UDP-N-acetylmuramate--L-alanine ligase (471 aa).

114-120 serves as a coordination point for ATP; sequence GTHGKTT.

Belongs to the MurCDEF family.

Its subcellular location is the cytoplasm. The enzyme catalyses UDP-N-acetyl-alpha-D-muramate + L-alanine + ATP = UDP-N-acetyl-alpha-D-muramoyl-L-alanine + ADP + phosphate + H(+). It participates in cell wall biogenesis; peptidoglycan biosynthesis. Cell wall formation. The chain is UDP-N-acetylmuramate--L-alanine ligase from Methylobacterium nodulans (strain LMG 21967 / CNCM I-2342 / ORS 2060).